Here is a 470-residue protein sequence, read N- to C-terminus: 6-phospho-beta-glucosidase BglB (470 aa).

E172 functions as the Proton donor in the catalytic mechanism. E361 functions as the Nucleophile in the catalytic mechanism.

This sequence belongs to the glycosyl hydrolase 1 family.

It carries out the reaction 6-phospho-beta-D-glucosyl-(1-&gt;4)-D-glucose + H2O = D-glucose 6-phosphate + D-glucose. Catalyzes the hydrolysis of phosphorylated beta-glucosides into glucose-6-phosphate (G-6-P) and aglycone. It has a high affinity for phosphorylated aromatic beta-glucosides (p-nitrophenyl-beta-glucoside, phenyl beta-glucoside, arbutin and phosphorylated salicin), and a low affinity for phosphorylated beta-methyl-glucoside. This chain is 6-phospho-beta-glucosidase BglB (bglB), found in Escherichia coli (strain K12).